Here is a 223-residue protein sequence, read N- to C-terminus: Triosephosphate isomerase (223 aa).

A substrate-binding site is contributed by asparagine 6–lysine 8. Residue histidine 86 is the Electrophile of the active site. The active-site Proton acceptor is the glutamate 151. Residues glycine 157 and serine 187 each contribute to the substrate site.

This sequence belongs to the triosephosphate isomerase family. In terms of assembly, homodimer.

It is found in the cytoplasm. It carries out the reaction D-glyceraldehyde 3-phosphate = dihydroxyacetone phosphate. It functions in the pathway carbohydrate biosynthesis; gluconeogenesis. Its pathway is carbohydrate degradation; glycolysis; D-glyceraldehyde 3-phosphate from glycerone phosphate: step 1/1. Functionally, involved in the gluconeogenesis. Catalyzes stereospecifically the conversion of dihydroxyacetone phosphate (DHAP) to D-glyceraldehyde-3-phosphate (G3P). The sequence is that of Triosephosphate isomerase from Campylobacter jejuni subsp. jejuni serotype O:2 (strain ATCC 700819 / NCTC 11168).